The chain runs to 501 residues: Probable Xaa-Pro aminopeptidase pepP (501 aa).

The interval 1–25 (MNYHSFLPLRRSSLSHSTTPPSKSR) is disordered. Polar residues predominate over residues 12–25 (SSLSHSTTPPSKSR). Mn(2+) contacts are provided by aspartate 298, aspartate 309, glutamate 432, and glutamate 472.

Belongs to the peptidase M24B family. Mn(2+) is required as a cofactor.

It catalyses the reaction Release of any N-terminal amino acid, including proline, that is linked to proline, even from a dipeptide or tripeptide.. In terms of biological role, catalyzes the removal of a penultimate prolyl residue from the N-termini of peptides. The sequence is that of Probable Xaa-Pro aminopeptidase pepP (pepP) from Metarhizium acridum (strain CQMa 102).